A 260-amino-acid chain; its full sequence is uncharacterized protein (260 aa).

The next 6 membrane-spanning stretches (helical) occupy residues Ile39–Ala59, Ile68–Ile88, Phe111–Gly131, Leu159–Ile179, Phe193–Gln213, and Phe214–Ile234.

This sequence belongs to the TatC family.

Its subcellular location is the mitochondrion membrane. This is an uncharacterized protein from Reclinomonas americana.